Consider the following 476-residue polypeptide: ATP synthase subunit beta (476 aa).

Position 154–161 (154–161 (GGAGVGKT)) interacts with ATP.

This sequence belongs to the ATPase alpha/beta chains family. In terms of assembly, F-type ATPases have 2 components, CF(1) - the catalytic core - and CF(0) - the membrane proton channel. CF(1) has five subunits: alpha(3), beta(3), gamma(1), delta(1), epsilon(1). CF(0) has three main subunits: a(1), b(2) and c(9-12). The alpha and beta chains form an alternating ring which encloses part of the gamma chain. CF(1) is attached to CF(0) by a central stalk formed by the gamma and epsilon chains, while a peripheral stalk is formed by the delta and b chains.

The protein localises to the cell inner membrane. The catalysed reaction is ATP + H2O + 4 H(+)(in) = ADP + phosphate + 5 H(+)(out). Functionally, produces ATP from ADP in the presence of a proton gradient across the membrane. The catalytic sites are hosted primarily by the beta subunits. The chain is ATP synthase subunit beta from Nitrobacter winogradskyi (strain ATCC 25391 / DSM 10237 / CIP 104748 / NCIMB 11846 / Nb-255).